The sequence spans 199 residues: Large ribosomal subunit protein bL9 (199 aa).

Residues 153 to 199 are disordered; it reads KPVKASEKKGRRPRRDEEASDEQILAEENSVTEEAVSEEIQNSESEN.

This sequence belongs to the bacterial ribosomal protein bL9 family.

Functionally, binds to the 23S rRNA. This Treponema denticola (strain ATCC 35405 / DSM 14222 / CIP 103919 / JCM 8153 / KCTC 15104) protein is Large ribosomal subunit protein bL9.